We begin with the raw amino-acid sequence, 315 residues long: Thioredoxin reductase (315 aa).

34–41 is a binding site for FAD; that stretch reads EGMKVGGQ. A disulfide bond links cysteine 134 and cysteine 137. 282 to 291 is a binding site for FAD; that stretch reads DIRVKSLRQV.

This sequence belongs to the class-II pyridine nucleotide-disulfide oxidoreductase family. As to quaternary structure, homodimer. FAD serves as cofactor.

It localises to the cytoplasm. It carries out the reaction [thioredoxin]-dithiol + NADP(+) = [thioredoxin]-disulfide + NADPH + H(+). The sequence is that of Thioredoxin reductase (trxB) from Peptoclostridium litorale (Clostridium litorale).